The primary structure comprises 388 residues: MSFITAFRERVFIASGDLIRTFRISEETELKNFISWSKINPERIQKPSFDIEKELKAVEKRVILCLAHSNVLTTHGRRLVAVGTNEKQIHVFEYFVNDKGDIVTAEHIVTSVVPKAPTAIVFDKEDAYVVVGDRAGDVHRFSVLNGSAIEMAGAISMILDVAFSPDGKRLLMADRDEKVRALRYPATSVIDSFFLGHTEYVKTLAVQDNDSLWSSGGDKNLYNWSIAKCSAPRRTLDLSQFDAPIRKISINLQHKKIAVIFEKIETVVIVDLNQESLQTTSVSIVGESQCLDIASTKDYFAVLGRSTVHLIDLNNMEQKFVPIDEELTITLTSTNDAIDNLFKNVTHNNQQEYEKRKADKFEQIEKKKRRLNEDINGDDGEGPGPSNS.

WD repeat units lie at residues 58–102 (VEKR…KGDI), 112–151 (VVPK…AIEM), 153–194 (GAIS…DSFF), and 196–234 (GHTE…APRR). Residues 365–388 (EKKKRRLNEDINGDDGEGPGPSNS) form a disordered region.

Belongs to the WD repeat TRM82 family. In terms of assembly, forms a heterodimer with the catalytic subunit.

It localises to the nucleus. It participates in tRNA modification; N(7)-methylguanine-tRNA biosynthesis. Functionally, required for the formation of N(7)-methylguanine at position 46 (m7G46) in tRNA. In the complex, it is required to stabilize and induce conformational changes of the catalytic subunit. The sequence is that of tRNA (guanine-N(7)-)-methyltransferase non-catalytic subunit from Caenorhabditis elegans.